We begin with the raw amino-acid sequence, 419 residues long: Serine--tRNA ligase (419 aa).

226-228 (TSE) provides a ligand contact to L-serine. Residues 257–259 (RRE) and Val273 each bind ATP. Residue Glu280 participates in L-serine binding. 344-347 (ELTS) provides a ligand contact to ATP. Thr379 contacts L-serine.

This sequence belongs to the class-II aminoacyl-tRNA synthetase family. Type-1 seryl-tRNA synthetase subfamily. As to quaternary structure, homodimer. The tRNA molecule binds across the dimer.

The protein resides in the cytoplasm. It carries out the reaction tRNA(Ser) + L-serine + ATP = L-seryl-tRNA(Ser) + AMP + diphosphate + H(+). The enzyme catalyses tRNA(Sec) + L-serine + ATP = L-seryl-tRNA(Sec) + AMP + diphosphate + H(+). It participates in aminoacyl-tRNA biosynthesis; selenocysteinyl-tRNA(Sec) biosynthesis; L-seryl-tRNA(Sec) from L-serine and tRNA(Sec): step 1/1. Functionally, catalyzes the attachment of serine to tRNA(Ser). Is also able to aminoacylate tRNA(Sec) with serine, to form the misacylated tRNA L-seryl-tRNA(Sec), which will be further converted into selenocysteinyl-tRNA(Sec). In Mycolicibacterium vanbaalenii (strain DSM 7251 / JCM 13017 / BCRC 16820 / KCTC 9966 / NRRL B-24157 / PYR-1) (Mycobacterium vanbaalenii), this protein is Serine--tRNA ligase.